A 232-amino-acid chain; its full sequence is Large ribosomal subunit protein uL1 (232 aa).

The protein belongs to the universal ribosomal protein uL1 family. As to quaternary structure, part of the 50S ribosomal subunit.

Functionally, binds directly to 23S rRNA. The L1 stalk is quite mobile in the ribosome, and is involved in E site tRNA release. In terms of biological role, protein L1 is also a translational repressor protein, it controls the translation of the L11 operon by binding to its mRNA. This chain is Large ribosomal subunit protein uL1, found in Burkholderia cenocepacia (strain HI2424).